The primary structure comprises 411 residues: Acetylornithine aminotransferase (411 aa).

Residues 107 to 108 (GT) and F141 contribute to the pyridoxal 5'-phosphate site. R144 lines the N(2)-acetyl-L-ornithine pocket. 227–230 (DEIQ) contacts pyridoxal 5'-phosphate. K256 carries the N6-(pyridoxal phosphate)lysine modification. T284 is a binding site for N(2)-acetyl-L-ornithine. T285 is a pyridoxal 5'-phosphate binding site.

Belongs to the class-III pyridoxal-phosphate-dependent aminotransferase family. ArgD subfamily. Homodimer. It depends on pyridoxal 5'-phosphate as a cofactor.

The protein resides in the cytoplasm. The enzyme catalyses N(2)-acetyl-L-ornithine + 2-oxoglutarate = N-acetyl-L-glutamate 5-semialdehyde + L-glutamate. It participates in amino-acid biosynthesis; L-arginine biosynthesis; N(2)-acetyl-L-ornithine from L-glutamate: step 4/4. The chain is Acetylornithine aminotransferase from Xylella fastidiosa (strain Temecula1 / ATCC 700964).